Consider the following 255-residue polypeptide: MMEQLRKKEQHIAKVVGECSTQGAVSVSFSTVQLAKGTCLEKLRPWMLRYRCSSRTGYAEWLADRAGAQSVRMAELLELYWDLIAVVEARFAVVPSEVEEERFYRRFQAHVVRRVGRRITCTARGRACAEDKYPDFQQIGDMYGAVGDEQGVHLYKWVQSSRRLLVLMDERAAGRVDLKRWLVMMMELVDGARMLRGCQALQVYVSREDLVNVKDLLKNLNWIGGELVQNVGDRWSDDEAMVWSDERYVVIRFDC.

Belongs to the ODC antizyme family. Interacts with ODC and thereby sterically blocks ODC homodimerization.

Ornithine decarboxylase (ODC) antizyme protein that negatively regulates ODC activity and intracellular polyamine biosynthesis in response to increased intracellular polyamine levels. Binds to ODC monomers, inhibiting the assembly of the functional ODC homodimer, and targets the monomers for ubiquitin-independent proteolytic destruction by the 26S proteasome. This is Ornithine decarboxylase antizyme (OAZ1) from Eremothecium gossypii (strain ATCC 10895 / CBS 109.51 / FGSC 9923 / NRRL Y-1056) (Yeast).